The sequence spans 331 residues: UDP-galactose/UDP-glucose transporter 3 (331 aa).

The next 8 helical transmembrane spans lie at 11-31 (VLLL…QGIL), 49-69 (HLAF…YIMI), 80-100 (APWW…AMGI), 112-132 (VLAK…VYGI), 135-155 (TLPE…FALL), 170-190 (APLG…TNAT), 206-226 (IMLG…FGLP), and 245-265 (WDIL…FLTI). A Di-lysine motif motif is present at residues 327 to 331 (KKKKA).

This sequence belongs to the nucleotide-sugar transporter family. UDP-galactose:UMP antiporter (TC 2.A.7.11) subfamily. Mostly expressed in flowers, and, to a lower extent, in roots, stems and leaves.

It localises to the endoplasmic reticulum membrane. Its subcellular location is the golgi apparatus membrane. Essential sugar transporter required for the transport of UDP-glucose from the cytoplasm into the Golgi and the endoplasmic reticulum. Essential for pollen development and involved in embryo sac progress. This Arabidopsis thaliana (Mouse-ear cress) protein is UDP-galactose/UDP-glucose transporter 3.